Consider the following 208-residue polypeptide: Small ribosomal subunit protein uS4 (208 aa).

Residues S98–V163 enclose the S4 RNA-binding domain.

This sequence belongs to the universal ribosomal protein uS4 family. As to quaternary structure, part of the 30S ribosomal subunit. Contacts protein S5. The interaction surface between S4 and S5 is involved in control of translational fidelity.

In terms of biological role, one of the primary rRNA binding proteins, it binds directly to 16S rRNA where it nucleates assembly of the body of the 30S subunit. Its function is as follows. With S5 and S12 plays an important role in translational accuracy. In Acidothermus cellulolyticus (strain ATCC 43068 / DSM 8971 / 11B), this protein is Small ribosomal subunit protein uS4.